A 301-amino-acid chain; its full sequence is Putative MgpC-like protein MPN_093 (301 aa).

It belongs to the MgpC family.

The sequence is that of Putative MgpC-like protein MPN_093 from Mycoplasma pneumoniae (strain ATCC 29342 / M129 / Subtype 1) (Mycoplasmoides pneumoniae).